The following is a 1347-amino-acid chain: Probable serine/threonine-protein kinase DDB_G0288147 (1347 aa).

The Phorbol-ester/DAG-type zinc-finger motif lies at 12–67 (NHRFEPYTLKHLTICKRCEKEIIGVSNSAQICYSCKNIYHTRCCKEIETKKLELIC). Disordered stretches follow at residues 262 to 316 (PFNE…LNES), 333 to 402 (SNNS…KSSK), and 463 to 485 (DNNN…NNNN). The segment covering 271–282 (DSTLSASTYNRR) has biased composition (polar residues). Composition is skewed to low complexity over residues 286 to 316 (KNKN…LNES), 333 to 342 (SNNSNNLAAL), and 350 to 361 (TTTTTTTTTTTT). Composition is skewed to basic residues over residues 366 to 382 (NNHH…KSRK) and 389 to 402 (NKKK…KSSK). Residues 464–485 (NNNNNNNNNNNNNNNSNNNNNN) show a composition bias toward low complexity. The 256-residue stretch at 599–854 (VKINVEIYDS…EILKVFYSLL (256 aa)) folds into the Protein kinase domain. ATP-binding positions include 605-613 (IYDSPLCTV) and Lys-626. The active-site Proton acceptor is Asp-724. Disordered regions lie at residues 937–1241 (SERK…IVNP) and 1282–1310 (SSDS…IRSP). Over residues 976–986 (IIDDDDDDDDD) the composition is skewed to acidic residues. 2 stretches are compositionally biased toward low complexity: residues 1004 to 1015 (NINSENKNNNNV) and 1024 to 1062 (SSNS…NNNN). 2 stretches are compositionally biased toward polar residues: residues 1063-1083 (LRQN…NQLM) and 1118-1127 (LSSSQTSEIG). Composition is skewed to low complexity over residues 1128 to 1241 (DNNT…IVNP) and 1282 to 1291 (SSDSSNSLSD).

It belongs to the protein kinase superfamily. TKL Ser/Thr protein kinase family.

The catalysed reaction is L-seryl-[protein] + ATP = O-phospho-L-seryl-[protein] + ADP + H(+). It catalyses the reaction L-threonyl-[protein] + ATP = O-phospho-L-threonyl-[protein] + ADP + H(+). The chain is Probable serine/threonine-protein kinase DDB_G0288147 from Dictyostelium discoideum (Social amoeba).